Consider the following 320-residue polypeptide: G-protein coupled receptor homolog FPV021 (320 aa).

Topologically, residues 1 to 18 (MDTDYGTVHTQQSVKGNT) are extracellular. A helical membrane pass occupies residues 19 to 39 (LILLIYFISFIVGFPGNCTVI). Residues 40–52 (WFTGYRWKKSVTT) are Cytoplasmic-facing. A helical transmembrane segment spans residues 53-73 (IWFLNLAIADTLFVIFIPFEI). Residues 74–91 (TYILMGHYWPFGLFVCRI) are Extracellular-facing. An intrachain disulfide couples C89 to C167. The chain crosses the membrane as a helical span at residues 92-112 (GSLMFNTGMYASIFFLTFISI). Over 113–133 (DRYCLAFRRDICNKYRYRINI) the chain is Cytoplasmic. Residues 134–154 (MVMIIISWIISILLSTPYMYF) form a helical membrane-spanning segment. The Extracellular portion of the chain corresponds to 155–188 (KNTNEKYRNNRDCLEDYHSDNNTYLLRRVVFCIS). The N-linked (GlcNAc...) asparagine; by host glycan is linked to N175. Residues 189–209 (LVMRYLVPSVVMLFCYCLLLF) form a helical membrane-spanning segment. The Cytoplasmic portion of the chain corresponds to 210–222 (KHSLFLSKGQTYT). The chain crosses the membrane as a helical span at residues 223–243 (IVIMITSFMVLWTPYNILYFI). Topologically, residues 244–260 (DVIGSHYYNADTIIDAA) are extracellular. The helical transmembrane segment at 261 to 281 (PISISLIFLSSSINPMIYMLV) threads the bilayer. The Cytoplasmic segment spans residues 282 to 320 (GRYVSFENYSMRESLKLILSEERDNQTNHENEIKMENIN).

Belongs to the G-protein coupled receptor 1 family.

It is found in the host cell membrane. In Vertebrata (FPV), this protein is G-protein coupled receptor homolog FPV021.